The following is a 427-amino-acid chain: Tryptophan synthase beta chain (427 aa).

At Lys-100 the chain carries N6-(pyridoxal phosphate)lysine.

Belongs to the TrpB family. In terms of assembly, tetramer of two alpha and two beta chains. It depends on pyridoxal 5'-phosphate as a cofactor.

The enzyme catalyses (1S,2R)-1-C-(indol-3-yl)glycerol 3-phosphate + L-serine = D-glyceraldehyde 3-phosphate + L-tryptophan + H2O. It participates in amino-acid biosynthesis; L-tryptophan biosynthesis; L-tryptophan from chorismate: step 5/5. Functionally, the beta subunit is responsible for the synthesis of L-tryptophan from indole and L-serine. The sequence is that of Tryptophan synthase beta chain (trpB) from Streptomyces coelicolor (strain ATCC BAA-471 / A3(2) / M145).